The primary structure comprises 1216 residues: MNLSQEHAINQNLHKNQKNEEKIEKKTINKDGRGQMNYDGEEGQGEKSRFQKMVENEKIEEPQQKDENIPNTDVIERKEVGVIERINSEDVPILMTDNATDYKVLQHNLKKGKVSKKSKEQIEQISKQEENDMLEYLKNYKSNEEFTIQLEDLLSFETYFSRDELHLLYREFKTISKSGMFMSKEDFISKLTPFSRNADLTISLMNAIDRNGDQKIAFPEFVQALSIMCRGTKKERLRFTFEICDFNGDSLVSRDEVYSTVKAISDIFSKFGYSKDKFGDPSEAVDSIFSSGLTTNGIYLHNKKELTLNEFLERGELNPDLSKCFGMFDYFYLKFIGQIDLLFKDKEINMNGQLTKIKPKTIFNFNISHRRTLSLRDGFLIVYKKKKFKHDEDKPSKVIFLPGSTVKVVVGSQPSKKKKFLSKKFHNYYGFRVTKGNYNRFFLMENRDEALNWVNAIRFHSRQGFRFQSFSKVRSNISVEWFINGSSYYNELAETIRRAKHEIFITGWWVSPYVYLQRDNGIENMEKSRLDRILTEKAKEGVKVYVLMWNETNLGVQLGSRHAKNWLEGCHSNIHVIRHPKRYPLSWSHHQKNAIIDQQIAFVGGIDICLMRYETSKFQLTDDQGKRFPGKDYGNLLGTVIRTGDPKKDQFNRRECPRMPWHDVHTKIVGPSAKDVASNFIQRWNHAIYVERSNRFQPILVPKNYTGLPSDDAKPDKWKNLVSNIRKGFSHVSYGREKPTHYQRAGDNPKVRSHTRQGAFGLQSDQIDNKIDKQKNNSTNSENSENSYSEFDEEDEEGNQEEEDEDEFDEFEKDENQKQENSKIPFNNKPSDAGGLKSKNYKNNNNNNIIESLKDEESFELPGTPKIDLNNDKLLKSIYHLSSNMSENSCVVQMVRSICPWSAGTDVEDSCYKAYLGLIKNAQHFIYIQNLFFISSCGSKLPKNRIALAILNRVRRAITLKEKFRVIIMVPISPSGDLALASSRMIIGWTNRTISQGGQSILELLKNEFPDVDLDQYISFNSIRQWEANGDRIFTEQIYVHSKVLIVDDRVAVIGSCNINDRSMMGSRDSELAVVVSDQSKLLITMNGKPFKVGKFPHTLRVGLWKTHLNLTDSEISSIIDPITDNAFINIWRKTARNNSIIYKEVFGDCILENQRRLGIVQKKYIPKTNELIVQLSQIQGVLIEYPLDMFCESNLFNEQVGIFTAESYVDVSIFT.

Residues 1 to 14 (MNLSQEHAINQNLH) show a composition bias toward polar residues. Residues 1–48 (MNLSQEHAINQNLHKNQKNEEKIEKKTINKDGRGQMNYDGEEGQGEKS) form a disordered region. Basic and acidic residues predominate over residues 17–33 (QKNEEKIEKKTINKDGR). EF-hand domains are found at residues 196-231 (RNAD…MCRG) and 232-267 (TKKE…ISDI). Positions 209, 211, 213, 215, and 220 each coordinate Ca(2+). Residues 347-462 (EINMNGQLTK…WVNAIRFHSR (116 aa)) form the PH domain. In terms of domain architecture, PLD phosphodiesterase 1 spans 585-612 (LSWSHHQKNAIIDQQIAFVGGIDICLMR). Active-site residues include His590, Lys592, and Asp597. The interval 732–844 (VSYGREKPTH…GLKSKNYKNN (113 aa)) is disordered. Residues 776-789 (NNSTNSENSENSYS) are compositionally biased toward low complexity. A compositionally biased stretch (acidic residues) spans 790–813 (EFDEEDEEGNQEEEDEDEFDEFEK). In terms of domain architecture, PLD phosphodiesterase 2 spans 1036 to 1063 (EQIYVHSKVLIVDDRVAVIGSCNINDRS). Residues His1041, Lys1043, and Asp1048 contribute to the active site.

It belongs to the phospholipase D family.

It localises to the cytoplasmic vesicle. It is found in the cytoplasm. The protein resides in the cell cortex. The enzyme catalyses a 1,2-diacyl-sn-glycero-3-phosphocholine + H2O = a 1,2-diacyl-sn-glycero-3-phosphate + choline + H(+). With respect to regulation, inhibited by butan-1-ol. Its function is as follows. Plays a role in cell growth. Hydrolyzes membrane phospholipids, such as PtdCho (phosphatidylcholine), producing the free headgroup and PtdOH (phosphatidic acid; signaling molecule on its own). Involved in the inhibition of actin-based motility and endocytosis. Its inhibition causes complete collapse of F-actin organization. Plays an important role in cell migration by localizing along the anterior cell membrane. Overexpression leads to the inability to aggregate even at higher cell density. Also known as a negative regulator of quorum sensing. The sequence is that of Phospholipase D B (pldB) from Dictyostelium discoideum (Social amoeba).